The following is a 418-amino-acid chain: EPS I polysaccharide export inner membrane protein EpsF (418 aa).

The next 10 helical transmembrane spans lie at 21 to 41, 45 to 65, 142 to 162, 170 to 190, 222 to 242, 262 to 282, 296 to 316, 326 to 346, 347 to 367, and 377 to 397; these read VLVVIGMLLAVPMAFPLFPIA, CAAILAILLPLGRLQHVLATA, PLMVWAILIFISLMLVWIAIY, YVVFVAYLSTITLYALQGSAI, AGTHSSAAALLLVCATVMLFL, LLVLLVLAVAAVAFGSAEFVM, SAWEFQLAVEAVLACLFAWLF, LTYFLFVLLCASTSFFAPAVG, ARLFRYTYCFYIVYLCVFFFA, and KTLASLLFLASLGWAFYIVDV.

This sequence to S.marcescens SfuB.

The protein resides in the cell inner membrane. Probably involved in polymerization and/or export of exopolysaccharide EPS I which functions as a virulence factor. May play a role in export of EPS I or its intermediates across the membranes. This chain is EPS I polysaccharide export inner membrane protein EpsF (epsF), found in Ralstonia solanacearum (Pseudomonas solanacearum).